A 323-amino-acid polypeptide reads, in one-letter code: MKSFTLTTLAALAGNAAAHATFQALWVDGVDYGAQCARLPASNSPVTDVTSNAIRCNANPSPARGKCPVKAGSTVTVEMHQQPGDRSCSSEAIGGAHYGPVMVYMSKVSDAASADGSSGWFKVFEDGWAKNPSGGSGDDDYWGTKDLNSCCGKMNVKIPADLPSGDYLLRAEALALHTAGSAGGAQFYMTCYQLTVTGSGSASPPTVSFPGAYKATDPGILVNIHAPLSGYTVPGPAVYSGGSTKKAGSACTGCESTCAVGSGPTATVSQSPGSTATSAPGGGGGCTVQKYQQCGGQGYTGCTNCASGSTCSAVSPPYYSQCV.

The N-terminal stretch at methionine 1–alanine 18 is a signal peptide. 2 residues coordinate Cu(2+): histidine 19 and histidine 97. A disulfide bond links cysteine 56 and cysteine 191. O2-binding residues include histidine 177 and glutamine 186. Cu(2+) is bound at residue tyrosine 188. Residues cysteine 286 to valine 323 form the CBM1 domain.

The protein belongs to the polysaccharide monooxygenase AA9 family. Requires Cu(2+) as cofactor.

The protein localises to the secreted. It catalyses the reaction [(1-&gt;4)-beta-D-glucosyl]n+m + reduced acceptor + O2 = 4-dehydro-beta-D-glucosyl-[(1-&gt;4)-beta-D-glucosyl]n-1 + [(1-&gt;4)-beta-D-glucosyl]m + acceptor + H2O.. Is able to utilize various natural phenolic compounds as reducing agents. Most of these reducing agents are present in plants, either free or as lignin building blocks, such as sinapic acid, or as flavonoids such as catechin and dopamine. Phenolic compounds with 1,2-benzenediol and 1,2,3-benzenetriol moieties yield the highest release of oxidized and non-oxidized glucooligosaccharides from cellulose compared to monophenols or sulfur-containing compounds. Functionally, lytic polysaccharide monooxygenase (LPMO) that depolymerizes crystalline and amorphous polysaccharides via the oxidation of scissile alpha- or beta-(1-4)-glycosidic bonds, yielding C1 oxidation products. Catalysis by LPMOs requires the reduction of the active-site copper from Cu(II) to Cu(I) by a reducing agent and H(2)O(2) or O(2) as a cosubstrate. Is active on regenerated amorphous cellulose (RAC). In Thermothelomyces thermophilus (strain ATCC 42464 / BCRC 31852 / DSM 1799) (Sporotrichum thermophile), this protein is AA9 family lytic polysaccharide monooxygenase B.